A 352-amino-acid polypeptide reads, in one-letter code: uncharacterized protein (352 aa).

The interval 1 to 40 (MTSTMKLFTDHAEISVRERPPQRNNNNQEQDNSNRPAPRR) is disordered. The segment covering 8 to 21 (FTDHAEISVRERPP) has biased composition (basic and acidic residues). Low complexity predominate over residues 22-36 (QRNNNNQEQDNSNRP). Residues 317–333 (MTITLPCGLTIAFFVYY) traverse the membrane as a helical segment.

The protein localises to the host cell membrane. This is an uncharacterized protein from Diadromus pulchellus idnoreovirus 1 (DpIRV-1).